The following is a 346-amino-acid chain: S-adenosylmethionine:tRNA ribosyltransferase-isomerase (346 aa).

The protein belongs to the QueA family. Monomer.

The protein resides in the cytoplasm. It carries out the reaction 7-aminomethyl-7-carbaguanosine(34) in tRNA + S-adenosyl-L-methionine = epoxyqueuosine(34) in tRNA + adenine + L-methionine + 2 H(+). Its pathway is tRNA modification; tRNA-queuosine biosynthesis. Transfers and isomerizes the ribose moiety from AdoMet to the 7-aminomethyl group of 7-deazaguanine (preQ1-tRNA) to give epoxyqueuosine (oQ-tRNA). In Lactococcus lactis subsp. cremoris (strain MG1363), this protein is S-adenosylmethionine:tRNA ribosyltransferase-isomerase.